We begin with the raw amino-acid sequence, 431 residues long: Adenylosuccinate synthetase (431 aa).

Residues 13–19 (GDEGKGK) and 41–43 (GHT) contribute to the GTP site. The active-site Proton acceptor is the aspartate 14. Mg(2+) contacts are provided by aspartate 14 and glycine 41. IMP-binding positions include 14–17 (DEGK), 39–42 (NAGH), threonine 130, arginine 144, glutamine 225, threonine 240, and arginine 306. Catalysis depends on histidine 42, which acts as the Proton donor. 302–308 (ATTGRQR) contacts substrate. Residues arginine 308, 334–336 (KLD), and 416–418 (STG) contribute to the GTP site.

It belongs to the adenylosuccinate synthetase family. Homodimer. It depends on Mg(2+) as a cofactor.

The protein localises to the cytoplasm. It catalyses the reaction IMP + L-aspartate + GTP = N(6)-(1,2-dicarboxyethyl)-AMP + GDP + phosphate + 2 H(+). It functions in the pathway purine metabolism; AMP biosynthesis via de novo pathway; AMP from IMP: step 1/2. In terms of biological role, plays an important role in the de novo pathway of purine nucleotide biosynthesis. Catalyzes the first committed step in the biosynthesis of AMP from IMP. In Halorhodospira halophila (strain DSM 244 / SL1) (Ectothiorhodospira halophila (strain DSM 244 / SL1)), this protein is Adenylosuccinate synthetase.